The sequence spans 513 residues: Nitrate transporter 2.2 (513 aa).

Transmembrane regions (helical) follow at residues 38-58, 74-94, 98-118, 128-148, 158-178, 196-216, 247-265, 281-301, 323-343, 351-371, 383-403, and 419-439; these read WICFFMSFVATFAPASLAPVI, VSAVCGAIAARLFMGIFVDVV, YGAAAAMLMTAPAVFCMALVT, FFIGLSLCMFVCCQFWCGTMF, AIAAGWGNMGGGACHFIMPLI, AFFVPGGIYIVTATLTLLLGI, LGNYRSWILALTYGYSFGV, FGLNLAVAGALGAIFGLMNIF, LWVLWITQTLGGIFCIIMGKV, IVIMIIFSIFCQQACGMHFGI, VSGLVGAGGNVGAAITQAIWF, and FVWMGVQAVALTVAVMFIWFP.

Belongs to the major facilitator superfamily. Nitrate/nitrite porter (TC 2.A.1.8) family.

It localises to the cell membrane. In terms of biological role, involved in nitrate transport, but does not seem to be able to mediate transport by its own. Acts as a dual component transporter with NAR2 (system 2). Involved in a high affinity transport specific for nitrate. The polypeptide is Nitrate transporter 2.2 (Chlamydomonas reinhardtii (Chlamydomonas smithii)).